The primary structure comprises 393 residues: Formate-dependent phosphoribosylglycinamide formyltransferase (393 aa).

Residues 22 to 23 and E82 each bind N(1)-(5-phospho-beta-D-ribosyl)glycinamide; that span reads EL. ATP contacts are provided by residues R114, K155, 160-165, 195-198, and E203; these read SSGKGQ and EGFI. Residues 119 to 308 enclose the ATP-grasp domain; that stretch reads RLAAEELDLP…QFALHARAIL (190 aa). Residues E267 and E279 each contribute to the Mg(2+) site. N(1)-(5-phospho-beta-D-ribosyl)glycinamide is bound by residues D286, K356, and 363–364; that span reads RR.

It belongs to the PurK/PurT family. In terms of assembly, homodimer.

The enzyme catalyses N(1)-(5-phospho-beta-D-ribosyl)glycinamide + formate + ATP = N(2)-formyl-N(1)-(5-phospho-beta-D-ribosyl)glycinamide + ADP + phosphate + H(+). Its pathway is purine metabolism; IMP biosynthesis via de novo pathway; N(2)-formyl-N(1)-(5-phospho-D-ribosyl)glycinamide from N(1)-(5-phospho-D-ribosyl)glycinamide (formate route): step 1/1. Functionally, involved in the de novo purine biosynthesis. Catalyzes the transfer of formate to 5-phospho-ribosyl-glycinamide (GAR), producing 5-phospho-ribosyl-N-formylglycinamide (FGAR). Formate is provided by PurU via hydrolysis of 10-formyl-tetrahydrofolate. In Pseudomonas fluorescens (strain ATCC BAA-477 / NRRL B-23932 / Pf-5), this protein is Formate-dependent phosphoribosylglycinamide formyltransferase.